We begin with the raw amino-acid sequence, 172 residues long: MTYISKKQAAKKVIVREKPILVRLKLIIGAGTASMTPPLGPNLGQYGINSIEFFNDFNTETKELFETGLALRVILWINVMKAFYFELQMPKISNLLKEYYKVECEAAKGGNVYIEKERLLKDCFKIAILLCTFNKAEKQWEQIEKKYLRITVLEILGTCRSCKIYVKKAENE.

It belongs to the universal ribosomal protein uL11 family.

Its subcellular location is the mitochondrion. The chain is Large ribosomal subunit protein uL11m (mrpl11) from Dictyostelium discoideum (Social amoeba).